We begin with the raw amino-acid sequence, 323 residues long: tRNA U34 carboxymethyltransferase (323 aa).

Carboxy-S-adenosyl-L-methionine-binding positions include Lys91, Trp105, Lys110, Gly130, 152–154 (DPT), 181–182 (IE), Met196, Tyr200, and Arg315.

It belongs to the class I-like SAM-binding methyltransferase superfamily. CmoB family. In terms of assembly, homotetramer.

It catalyses the reaction carboxy-S-adenosyl-L-methionine + 5-hydroxyuridine(34) in tRNA = 5-carboxymethoxyuridine(34) in tRNA + S-adenosyl-L-homocysteine + H(+). Its function is as follows. Catalyzes carboxymethyl transfer from carboxy-S-adenosyl-L-methionine (Cx-SAM) to 5-hydroxyuridine (ho5U) to form 5-carboxymethoxyuridine (cmo5U) at position 34 in tRNAs. This chain is tRNA U34 carboxymethyltransferase, found in Escherichia coli O157:H7.